The chain runs to 513 residues: Bifunctional pantoate ligase/cytidylate kinase (513 aa).

A pantoate--beta-alanine ligase region spans residues 1 to 283 (MVQVFRTIAG…VGSTRLIDNL (283 aa)). 30–37 (MGSLHAGH) is an ATP binding site. The active-site Proton donor is H37. Q61 provides a ligand contact to (R)-pantoate. Residue Q61 coordinates beta-alanine. 150–153 (GAKD) is a binding site for ATP. Residue Q156 coordinates (R)-pantoate. ATP is bound by residues V179 and 187-190 (MSSR). The cytidylate kinase stretch occupies residues 284–513 (VLNHRLPIIA…IELYKKYNKG (230 aa)).

The protein in the N-terminal section; belongs to the pantothenate synthetase family. It in the C-terminal section; belongs to the cytidylate kinase family. Type 1 subfamily.

The protein resides in the cytoplasm. The catalysed reaction is (R)-pantoate + beta-alanine + ATP = (R)-pantothenate + AMP + diphosphate + H(+). It catalyses the reaction CMP + ATP = CDP + ADP. It carries out the reaction dCMP + ATP = dCDP + ADP. It participates in cofactor biosynthesis; (R)-pantothenate biosynthesis; (R)-pantothenate from (R)-pantoate and beta-alanine: step 1/1. Catalyzes the condensation of pantoate with beta-alanine in an ATP-dependent reaction via a pantoyl-adenylate intermediate. Functionally, catalyzes the transfer of a phosphate group from ATP to either CMP or dCMP to form CDP or dCDP and ADP, respectively. This chain is Bifunctional pantoate ligase/cytidylate kinase, found in Synechocystis sp. (strain ATCC 27184 / PCC 6803 / Kazusa).